Reading from the N-terminus, the 533-residue chain is DELLA protein GAI (533 aa).

The span at 1 to 12 (MKRDHHHHHHQD) shows a compositional bias: basic residues. Residues 1–24 (MKRDHHHHHHQDKKTMMMNEEDDG) form a disordered region. Residues 28 to 32 (DELLA) carry the DELLA motif motif. An LEXLE motif motif is present at residues 50-54 (LEQLE). The VHYNP motif signature appears at 73–77 (VHYNP). One can recognise a GRAS domain in the interval 160–529 (VDSQENGVRL…RPLIATSAWK (370 aa)). The segment at 167 to 221 (VRLVHALLACAEAVQKENLTVAEALVKQIGFLAVSQIGAMRKVATYFAEALARRI) is leucine repeat I (LRI). The LxCxE motif motif lies at 174-178 (LACAE). The tract at residues 240 to 305 (QMHFYETCPY…GGPPVFRLTG (66 aa)) is VHIID. Positions 271 to 275 (VHVID) match the VHIID motif. The tract at residues 319–351 (EVGCKLAHLAEAIHVEFEYRGFVANTLADLDAS) is leucine repeat II (LRII). Residues 363-450 (VAVNSVFELH…EVYLGKQICN (88 aa)) are PFYRE. Positions 371-375 (LHKLL) match the LXXLL motif motif. The interval 453-529 (ACDGPDRVER…RPLIATSAWK (77 aa)) is SAW.

The protein belongs to the GRAS family. DELLA subfamily. As to quaternary structure, interacts directly with the GID2/SLY1 component of the SCF(GID2) complex. Interacts (via N-terminus) with GID1A, GID1B and GID1B (via N-terminus). Interacts with the BOI proteins BOI, BRG1, BRG2, BRG3 and NUP58. Interacts with TOPP4. Interacts with TCP14 and TCP15. Interacts with FLZ5. Binds to and coactivates GAF1/IDD2 and ENY/IDD1 at the promoter of GA20OX2 gene. Binds to PDF2 and ATML1. Interacts with the prefoldin alpha subunits PFD3 and PFD5 in the nucleus. Post-translationally, phosphorylated. Gibberellin (GA) induces dephosphorylation of GAI by TOPP4 and subsequent degradation by the proteasomal pathway. In terms of processing, may be ubiquitinated, as suggested by its interaction with GID2. Ubiquitination is however unsure since in contrast to other DELLA proteins, it is not ubiquitinated and degraded upon GA application. Nevertheless, ubiquitination may be triggered by other processes. In terms of tissue distribution, ubiquitously expressed. Expressed in rosette leaves, roots, stems and inflorescences of greenhouse grown.

Its subcellular location is the nucleus. Its activity is regulated as follows. Transcription activation is repressed by gibberellic acid GA(3) in the presence of TPR4. Transcriptional regulator that acts as a repressor of the gibberellin (GA) signaling pathway. Transcription coactivator of the zinc finger transcription factors GAF1/IDD2 and ENY/IDD1 in regulation of gibberellin homeostasis and signaling. No effect of the BOI proteins on its stability. Probably acts by participating in large multiprotein complexes that repress transcription of GA-inducible genes. Positively regulates XERICO expression. In contrast to RGA, it is less sensitive to GA. Its activity is probably regulated by other phytohormones such as auxin and ethylene. Involved in the regulation of seed dormancy and germination, including glucose-induced delay of seed germination. Involved in the process leading to microtubules (MTs) dissociation in response to gibberellic acid (GA) probably by mediating the translocation of the prefoldin co-chaperone complex from the cytoplasm to the nucleus. The sequence is that of DELLA protein GAI from Arabidopsis thaliana (Mouse-ear cress).